Reading from the N-terminus, the 228-residue chain is DNA-binding response regulator MtrA (228 aa).

The region spanning 7–120 (RILVVDDDPS…ELVARVRARL (114 aa)) is the Response regulatory domain. At Asp-56 the chain carries 4-aspartylphosphate. A DNA-binding region (ompR/PhoB-type) is located at residues 128–227 (AEMLSIGDVE…VRGVGYKAGP (100 aa)).

As to quaternary structure, probably a monomer when inactive, phosphorylation may permit it to oligomerize. The monomeric form does not seem to be phosphorylated. Post-translationally, phosphorylated by MtrB.

The protein resides in the cytoplasm. In terms of biological role, member of the two-component regulatory system MtrA/MtrB, responding to environmental signals. Controls expression of a number of genes including dnaA, ripA, fbpB and probably itself. Probably plays a role in cell division. The sequence is that of DNA-binding response regulator MtrA (mtrA) from Mycolicibacterium smegmatis (strain ATCC 700084 / mc(2)155) (Mycobacterium smegmatis).